The primary structure comprises 334 residues: TPR repeat-containing protein YsoA (334 aa).

TPR repeat units lie at residues 17–50 (KDRL…DDTE), 52–84 (DLHL…GYGH), and 195–230 (HPII…EPSE).

The sequence is that of TPR repeat-containing protein YsoA (ysoA) from Bacillus subtilis (strain 168).